Reading from the N-terminus, the 473-residue chain is MMLGVYTLLLLWGLATPCLGLLETVGTLARIDKDELGKAIQNSLVGGPILQNVLGTVTSVNQGLLGAGGLLGGGGLLSYGGIFSLVEELSGLKIEELTLPKVSLKLLPGVGVQLNLHTKVSLHGSGPLVGLLQLAAEVNVSSKVALGMSPRGTPILVLKRCSTLLGHISLMSGLLPTPIFGLVEQTLCKVLPGLLCPVVDSVLSVVNELLGATLSLVPLGPLGSVEFTLATLPLISNQYIELDINPIVKSIAGDVIDFPKPRIPVKVPPKEDHTSQVTVPLYLFSTVFGLLQTNGALDLDITPEMVPRNVPLTTTDLAALAPEALGKLPPAQHLLLSLRVTKSPMVLLQNKKATVSIPVTIHVLSSVPQGTPVALFQLNGVMTLNAHLAPSSTKLHISLSLERLSVQLASSFPQPFDASRLEEWLSDVVRAAYMQRLNEHLEVGIPLPKILNVNFANSVVDIIENAVVLTVAP.

Residues 1-20 (MMLGVYTLLLLWGLATPCLG) form the signal peptide. A glycan (N-linked (GlcNAc...) asparagine) is linked at Asn-139. Cys-161 and Cys-196 form a disulfide bridge.

Belongs to the BPI/LBP/Plunc superfamily. BPI/LBP family.

The protein resides in the secreted. In terms of biological role, may have the capacity to recognize and bind specific classes of odorants. May act as a carrier molecule, transporting odorants across the mucus layer to access receptor sites. May serve as a primary defense mechanism by recognizing and removing potentially harmful odorants or pathogenic microorganisms from the mucosa or clearing excess odorant from mucus to enable new odorant stimuli to be received. This chain is BPI fold-containing family B member 3, found in Mus musculus (Mouse).